The chain runs to 1249 residues: Minor capsid protein M1249L (1249 aa).

The protein belongs to the asfivirus M1249L family. In terms of assembly, interacts with the minor capsid protein p17 and with the hexon capsid protein p72 capsomers; these interactions form a rigid zipper structure that stabilizes the capsomers. Interacts with host IRF3.

The protein resides in the virion. Its subcellular location is the host cytoplasm. In terms of biological role, together with the penton and the other minor capsid proteins (p17, p49), forms a complicated network immediately below the outer capsid shell, stabilizing the whole capsid. In addition, blocks IFN-beta transactivation mediated by the cGAS-STING pathway and regulates the transcriptional activity of IFN-beta. Mechanistically, suppresses the phosphorylation of host key adapter protein TBK1 and degrades host IRF3 in the cytoplasm. The protein is Minor capsid protein M1249L of African swine fever virus (isolate Tick/Malawi/Lil 20-1/1983) (ASFV).